The following is a 190-amino-acid chain: RNA-binding protein OPG065 (190 aa).

The Z-binding domain maps to 5 to 70 (YIDERSNAEI…DIPPRWFMTT (66 aa)). One can recognise a DRBM domain in the interval 117-184 (NPVTVINEYC…AKLAVDKLLG (68 aa)).

Belongs to the orthopoxvirus OPG065 family. In terms of assembly, interacts with host G1P2/ISG15. Interacts with host EIF2AK2/PKR. Interacts with host ZBP1.

In terms of biological role, RNA-binding protein that plays a role in the inhibition of multiple cellular antiviral responses activated by double-stranded RNA (dsRNA), such as inhibition of PKR activation, necroptosis, and IFN-mediated antiviral activities. Recognizes and binds Z-RNA structures via its Z-binding domain and dsRNA via its DRBM domain: RNA-binding activity is required to escape host ZBP1-dependent necroptosis. Mechanistically, the Z-binding domain binds Z-RNAs that are produced during vaccinia virus infection, thereby competing with Z-RNA detection by host ZBP1, suppressing ZBP1-dependent necroptosis. Acts as a key inhibitor of the interferon response by blocking the phosphorylation and subsequent activation of IRF3 and IRF7 kinases that are required for interferon-alpha gene expression. Inhibits NF-kappa-B activation and the ubiquitin-like protein ISG15, which is an early antiviral protein. The binding with host ISG15 subsequently blocks host ISGylation. This Vaccinia virus (strain Western Reserve) (VACV) protein is RNA-binding protein OPG065 (OPG065).